A 615-amino-acid polypeptide reads, in one-letter code: Proteasome-associated ATPase (615 aa).

The interval 1-27 is disordered; the sequence is MSESERSEASEVFGTSPDSRLSSEDAA. Positions 22 to 99 form a coiled coil; the sequence is SSEDAAELEQ…LREEVDRLGQ (78 aa). 302 to 307 serves as a coordination point for ATP; the sequence is GCGKTL. The interval 614 to 615 is docks into pockets in the proteasome alpha-ring; it reads YL.

The protein belongs to the AAA ATPase family. In terms of assembly, homohexamer. Assembles into a hexameric ring structure that caps the 20S proteasome core. Strongly interacts with the prokaryotic ubiquitin-like protein Pup through a hydrophobic interface; the interacting region of ARC lies in its N-terminal coiled-coil domain. There is one Pup binding site per ARC hexamer ring. Upon ATP-binding, the C-terminus of ARC interacts with the alpha-rings of the proteasome core, possibly by binding to the intersubunit pockets.

Its pathway is protein degradation; proteasomal Pup-dependent pathway. Its function is as follows. ATPase which is responsible for recognizing, binding, unfolding and translocation of pupylated proteins into the bacterial 20S proteasome core particle. May be essential for opening the gate of the 20S proteasome via an interaction with its C-terminus, thereby allowing substrate entry and access to the site of proteolysis. Thus, the C-termini of the proteasomal ATPase may function like a 'key in a lock' to induce gate opening and therefore regulate proteolysis. The chain is Proteasome-associated ATPase from Mycolicibacterium vanbaalenii (strain DSM 7251 / JCM 13017 / BCRC 16820 / KCTC 9966 / NRRL B-24157 / PYR-1) (Mycobacterium vanbaalenii).